Consider the following 524-residue polypeptide: Alkaline phosphatase, tissue-nonspecific isozyme (524 aa).

Positions 1 to 17 (MISPFLVLAIGTCLTNS) are cleaved as a signal peptide. Asp-60 contacts Mg(2+). Zn(2+) contacts are provided by Asp-60 and Ser-110. Ser-110 serves as the catalytic Phosphoserine intermediate. Position 110 is a phosphoserine (Ser-110). A disulfide bridge links Cys-139 with Cys-201. The N-linked (GlcNAc...) asparagine glycan is linked to Asn-140. Residue Thr-173 coordinates Mg(2+). Asn-230 carries N-linked (GlcNAc...) asparagine glycosylation. Position 235 (Glu-235) interacts with Ca(2+). Asn-271 is a glycosylation site (N-linked (GlcNAc...) asparagine). The Ca(2+) site is built by Phe-290 and Glu-291. The N-linked (GlcNAc...) asparagine glycan is linked to Asn-303. A Ca(2+)-binding site is contributed by Asp-306. Glu-332 serves as a coordination point for Mg(2+). Positions 337, 341, 378, and 379 each coordinate Zn(2+). Asn-430 carries N-linked (GlcNAc...) asparagine glycosylation. His-454 is a binding site for Zn(2+). A disulfide bond links Cys-489 and Cys-497. A lipid anchor (GPI-anchor amidated serine) is attached at Ser-501. Residues 502–524 (SAGSLAAGPLLLALALYPLSVLF) constitute a propeptide, removed in mature form.

Belongs to the alkaline phosphatase family. As to quaternary structure, homodimer. Requires Mg(2+) as cofactor. Zn(2+) serves as cofactor. Ca(2+) is required as a cofactor. Post-translationally, N-glycosylated.

It is found in the cell membrane. Its subcellular location is the extracellular vesicle membrane. It localises to the mitochondrion membrane. The protein localises to the mitochondrion intermembrane space. The catalysed reaction is a phosphate monoester + H2O = an alcohol + phosphate. The enzyme catalyses diphosphate + H2O = 2 phosphate + H(+). It carries out the reaction pyridoxal 5'-phosphate + H2O = pyridoxal + phosphate. It catalyses the reaction phosphoethanolamine + H2O = ethanolamine + phosphate. The catalysed reaction is N-phosphocreatine + H2O = creatine + phosphate. The enzyme catalyses ATP + H2O = ADP + phosphate + H(+). It carries out the reaction ADP + H2O = AMP + phosphate + H(+). It catalyses the reaction AMP + H2O = adenosine + phosphate. Phosphatase activity is specifically inhibited by 5-((5-chloro-2-methoxyphenyl)sulfonamido)nicotinamide (SBI-425). In terms of biological role, alkaline phosphatase that metabolizes various phosphate compounds and plays a key role in skeletal mineralization and adaptive thermogenesis. Has broad substrate specificity and can hydrolyze a considerable variety of compounds: however, only a few substrates, such as diphosphate (inorganic pyrophosphate; PPi), pyridoxal 5'-phosphate (PLP) and N-phosphocreatine are natural substrates. Plays an essential role in skeletal and dental mineralization via its ability to hydrolyze extracellular diphosphate, a potent mineralization inhibitor, to phosphate: it thereby promotes hydroxyapatite crystal formation and increases inorganic phosphate concentration. Acts in a non-redundant manner with PHOSPHO1 in skeletal mineralization: while PHOSPHO1 mediates the initiation of hydroxyapatite crystallization in the matrix vesicles (MVs), ALPL/TNAP catalyzes the spread of hydroxyapatite crystallization in the extracellular matrix. Also promotes dephosphorylation of osteopontin (SSP1), an inhibitor of hydroxyapatite crystallization in its phosphorylated state; it is however unclear whether ALPL/TNAP mediates SSP1 dephosphorylation via a direct or indirect manner. Catalyzes dephosphorylation of PLP to pyridoxal (PL), the transportable form of vitamin B6, in order to provide a sufficient amount of PLP in the brain, an essential cofactor for enzymes catalyzing the synthesis of diverse neurotransmitters. Additionally, also able to mediate ATP degradation in a stepwise manner to adenosine, thereby regulating the availability of ligands for purinergic receptors. Also capable of dephosphorylating microbial products, such as lipopolysaccharides (LPS) as well as other phosphorylated small-molecules, such as poly-inosine:cytosine (poly I:C). Acts as a key regulator of adaptive thermogenesis as part of the futile creatine cycle: localizes to the mitochondria of thermogenic fat cells and acts by mediating hydrolysis of N-phosphocreatine to initiate a futile cycle of creatine dephosphorylation and phosphorylation. During the futile creatine cycle, creatine and N-phosphocreatine are in a futile cycle, which dissipates the high energy charge of N-phosphocreatine as heat without performing any mechanical or chemical work. This chain is Alkaline phosphatase, tissue-nonspecific isozyme, found in Homo sapiens (Human).